The chain runs to 122 residues: Biogenesis of lysosome-related organelles complex 1 subunit BLS1 (122 aa).

Serine 33 is modified (phosphoserine).

This sequence belongs to the BLOC1S1 family. In terms of assembly, component of the biogenesis of lysosome-related organelles complex-1 (BLOC-1) composed of at least BLI1, BLS1, CNL1, KXD1, SNN1 and VAB2.

The protein localises to the endosome. In terms of biological role, component of the biogenesis of lysosome-related organelles complex-1 (BLOC-1), a complex involved in endosomal cargo sorting. The polypeptide is Biogenesis of lysosome-related organelles complex 1 subunit BLS1 (BLS1) (Saccharomyces cerevisiae (strain RM11-1a) (Baker's yeast)).